We begin with the raw amino-acid sequence, 499 residues long: Bifunctional purine biosynthesis protein PurH (499 aa).

The MGS-like domain maps to 1 to 144 (MIKRALISVF…KNFKDVVVLT (144 aa)).

This sequence belongs to the PurH family.

The enzyme catalyses (6R)-10-formyltetrahydrofolate + 5-amino-1-(5-phospho-beta-D-ribosyl)imidazole-4-carboxamide = 5-formamido-1-(5-phospho-D-ribosyl)imidazole-4-carboxamide + (6S)-5,6,7,8-tetrahydrofolate. It catalyses the reaction IMP + H2O = 5-formamido-1-(5-phospho-D-ribosyl)imidazole-4-carboxamide. It functions in the pathway purine metabolism; IMP biosynthesis via de novo pathway; 5-formamido-1-(5-phospho-D-ribosyl)imidazole-4-carboxamide from 5-amino-1-(5-phospho-D-ribosyl)imidazole-4-carboxamide (10-formyl THF route): step 1/1. The protein operates within purine metabolism; IMP biosynthesis via de novo pathway; IMP from 5-formamido-1-(5-phospho-D-ribosyl)imidazole-4-carboxamide: step 1/1. This chain is Bifunctional purine biosynthesis protein PurH, found in Clostridium botulinum (strain Okra / Type B1).